Reading from the N-terminus, the 1036-residue chain is DNA-directed RNA polymerase subunit beta (1036 aa).

This sequence belongs to the RNA polymerase beta chain family. In plastids the minimal PEP RNA polymerase catalytic core is composed of four subunits: alpha, beta, beta', and beta''. When a (nuclear-encoded) sigma factor is associated with the core the holoenzyme is formed, which can initiate transcription.

The protein resides in the plastid. It localises to the chloroplast. It carries out the reaction RNA(n) + a ribonucleoside 5'-triphosphate = RNA(n+1) + diphosphate. Functionally, DNA-dependent RNA polymerase catalyzes the transcription of DNA into RNA using the four ribonucleoside triphosphates as substrates. In Cyanidioschyzon merolae (strain NIES-3377 / 10D) (Unicellular red alga), this protein is DNA-directed RNA polymerase subunit beta.